The chain runs to 38 residues: Large ribosomal subunit protein bL36 (38 aa).

This sequence belongs to the bacterial ribosomal protein bL36 family.

The sequence is that of Large ribosomal subunit protein bL36 from Enterococcus faecalis (strain ATCC 700802 / V583).